A 138-amino-acid polypeptide reads, in one-letter code: DASH complex subunit DAD2 (138 aa).

Polar residues predominate over residues 1–14; that stretch reads MSGFSSRPLSTHLR. Disordered regions lie at residues 1–25 and 116–138; these read MSGF…QGQS and PTEH…SGRG.

Belongs to the DASH complex DAD2 family. As to quaternary structure, component of the DASH complex consisting of ASK1, DAD1, DAD2, DAD3, DAD4, DAM1, DUO1, HSK3, SPC19 and SPC34, with a stoichiometry of one copy of each subunit per complex. Multiple DASH complexes oligomerize to form a ring that encircles spindle microtubules and organizes the rod-like NDC80 complexes of the outer kinetochore. DASH complex oligomerization strengthens microtubule attachments. On cytoplasmic microtubules, DASH complexes appear to form patches instead of rings.

The protein localises to the chromosome. It is found in the centromere. Its subcellular location is the kinetochore. It localises to the cytoplasm. The protein resides in the cytoskeleton. The protein localises to the spindle. It is found in the nucleus. In terms of biological role, component of the DASH complex that connects microtubules with kinetochores and couples microtubule depolymerisation to chromosome movement; it is involved in retrieving kinetochores to the spindle poles before their re-orientation on the spindle in early mitosis and allows microtubule depolymerization to pull chromosomes apart and resist detachment during anaphase. Kinetochores, consisting of a centromere-associated inner segment and a microtubule-contacting outer segment, play a crucial role in chromosome segregation by mediating the physical connection between centromeric DNA and microtubules. Kinetochores also serve as an input point for the spindle assembly checkpoint, which delays anaphase until all chromosomes have bioriented on the mitotic spindle. The protein is DASH complex subunit DAD2 of Chaetomium thermophilum (strain DSM 1495 / CBS 144.50 / IMI 039719) (Thermochaetoides thermophila).